The following is a 123-amino-acid chain: Methicillin resistance regulatory protein MecI (123 aa).

Residues 7-71 (EISSAEWEVM…KDNKIFQYYS (65 aa)) constitute a DNA-binding region (H-T-H motif). Positions 74-123 (EESDIKYKTSKNFINKVYKGGFNSLVLNFVEKEDLSQDEIEELRNILNKK) are important for dimerization.

It belongs to the BlaI transcriptional regulatory family. In terms of assembly, monomer and homodimer. Post-translationally, upon exposure to beta-lactams, proteolytic cleavage at a single site impairs dimerization and abolishes repressor activity.

It is found in the cytoplasm. Functionally, transcriptional repressor that constitutively blocks the transcription of the gene for the penicillin-binding protein MecA. Binds DNA as a dimer. In Mammaliicoccus sciuri (Staphylococcus sciuri), this protein is Methicillin resistance regulatory protein MecI (mecI).